Reading from the N-terminus, the 350-residue chain is Melatonin receptor type 1A-A (350 aa).

The Extracellular portion of the chain corresponds to 1–29 (MFMNGSSLNSSALDPSEQALQRPPWVTTT). N4 and N9 each carry an N-linked (GlcNAc...) asparagine glycan. Residues 30-50 (LGCFLIFTIVVDILGNLLVIF) traverse the membrane as a helical segment. Residues 51-63 (SVYRNKKLQNAGN) lie on the Cytoplasmic side of the membrane. A helical membrane pass occupies residues 64-84 (IFVVSLAVADLVVAIYPYPLV). Over 85-101 (LTSIFHRGWNLGYMHCQ) the chain is Extracellular. C100 and C177 are oxidised to a cystine. Residues 102-122 (ISGFLMGVSVIGSIFNITGIA) traverse the membrane as a helical segment. Residues 123–144 (INCYCYICHSLKYDKLYSDKNS) are Cytoplasmic-facing. A helical membrane pass occupies residues 145 to 165 (VCYVLLIWALTVLAIVPNLFV). Topologically, residues 166-187 (GSLQYDPRVYSCTFEQSASSAY) are extracellular. The helical transmembrane segment at 188–208 (TIAVVFFHFILPIMIVTYCYL) threads the bilayer. Over 209–240 (RIWVLVIQVRRRVKNDNRPKITPHDVRNFVTM) the chain is Cytoplasmic. The chain crosses the membrane as a helical span at residues 241–261 (FVVFVLFAVCWAPLNFIGLAV). At 262-267 (AISPER) the chain is on the extracellular side. The chain crosses the membrane as a helical span at residues 268–288 (VVPLIPEWLFVASYFMAYFNS). Over 289 to 350 (CLNAIVYGVL…NNNQVKVDSV (62 aa)) the chain is Cytoplasmic.

This sequence belongs to the G-protein coupled receptor 1 family.

The protein localises to the cell membrane. Its function is as follows. High affinity receptor for melatonin. The activity of this receptor is mediated by pertussis toxin sensitive G proteins that inhibits adenylate cyclase activity. The protein is Melatonin receptor type 1A-A (mtnr1aa) of Danio rerio (Zebrafish).